The primary structure comprises 570 residues: Urease subunit alpha (570 aa).

The region spanning 131-570 (GGMDSHIHFI…LPMAQRYFLF (440 aa)) is the Urease domain. Residues His136, His138, and Lys219 each coordinate Ni(2+). Lys219 bears the N6-carboxylysine mark. His221 contacts substrate. Residues His248 and His274 each coordinate Ni(2+). His322 (proton donor) is an active-site residue. Asp362 is a binding site for Ni(2+).

It belongs to the metallo-dependent hydrolases superfamily. Urease alpha subunit family. In terms of assembly, heterotrimer of UreA (gamma), UreB (beta) and UreC (alpha) subunits. Three heterotrimers associate to form the active enzyme. Ni cation is required as a cofactor. In terms of processing, carboxylation allows a single lysine to coordinate two nickel ions.

The protein resides in the cytoplasm. The catalysed reaction is urea + 2 H2O + H(+) = hydrogencarbonate + 2 NH4(+). The protein operates within nitrogen metabolism; urea degradation; CO(2) and NH(3) from urea (urease route): step 1/1. This chain is Urease subunit alpha, found in Allorhizobium ampelinum (strain ATCC BAA-846 / DSM 112012 / S4) (Agrobacterium vitis (strain S4)).